A 356-amino-acid chain; its full sequence is Dual-specificity RNA methyltransferase RlmN (356 aa).

Glutamate 87 acts as the Proton acceptor in catalysis. The 234-residue stretch at 106–339 folds into the Radical SAM core domain; sequence QEAKYTICVS…CTIRDSKGID (234 aa). Cysteine 113 and cysteine 344 are oxidised to a cystine. [4Fe-4S] cluster-binding residues include cysteine 120, cysteine 124, and cysteine 127. S-adenosyl-L-methionine contacts are provided by residues 170-171, serine 202, 225-227, and asparagine 301; these read GE and SLH. The active-site S-methylcysteine intermediate is cysteine 344.

This sequence belongs to the radical SAM superfamily. RlmN family. Requires [4Fe-4S] cluster as cofactor.

The protein resides in the cytoplasm. It carries out the reaction adenosine(2503) in 23S rRNA + 2 reduced [2Fe-2S]-[ferredoxin] + 2 S-adenosyl-L-methionine = 2-methyladenosine(2503) in 23S rRNA + 5'-deoxyadenosine + L-methionine + 2 oxidized [2Fe-2S]-[ferredoxin] + S-adenosyl-L-homocysteine. It catalyses the reaction adenosine(37) in tRNA + 2 reduced [2Fe-2S]-[ferredoxin] + 2 S-adenosyl-L-methionine = 2-methyladenosine(37) in tRNA + 5'-deoxyadenosine + L-methionine + 2 oxidized [2Fe-2S]-[ferredoxin] + S-adenosyl-L-homocysteine. Specifically methylates position 2 of adenine 2503 in 23S rRNA and position 2 of adenine 37 in tRNAs. m2A2503 modification seems to play a crucial role in the proofreading step occurring at the peptidyl transferase center and thus would serve to optimize ribosomal fidelity. This chain is Dual-specificity RNA methyltransferase RlmN, found in Sulfurimonas denitrificans (strain ATCC 33889 / DSM 1251) (Thiomicrospira denitrificans (strain ATCC 33889 / DSM 1251)).